The following is a 504-amino-acid chain: UDP-GalNAc:beta-1,3-N-acetylgalactosaminyltransferase 2 (504 aa).

Residues Met-1 to Asn-3 lie on the Cytoplasmic side of the membrane. The helical; Signal-anchor for type II membrane protein transmembrane segment at Trp-4–Leu-24 threads the bilayer. Topologically, residues Arg-25–Arg-504 are lumenal. N-linked (GlcNAc...) asparagine glycans are attached at residues Asn-117 and Asn-176.

The protein belongs to the glycosyltransferase 31 family. Post-translationally, N-glycosylated. In terms of tissue distribution, present in testis (at protein level). In testis, it is mainly detected in the middle layers of seminiferous tubules at stages XII to II. Strongly expressed in primary and secondary spermatocytes and early round spermatids, but not in spermatogonia, elongating or elongated spermatids, or in Leydig or Sertoli cells.

Its subcellular location is the golgi apparatus membrane. It is found in the endoplasmic reticulum. The catalysed reaction is 3-O-(N-acetyl-beta-D-glucosaminyl-(1-&gt;4)-alpha-D-mannosyl)-L-threonyl-[protein] + UDP-N-acetyl-alpha-D-galactosamine = 3-O-[beta-D-GalNAc-(1-&gt;3)-beta-D-GlcNAc-(1-&gt;4)-alpha-D-Man]-L-Thr-[protein] + UDP + H(+). Its pathway is protein modification; protein glycosylation. Beta-1,3-N-acetylgalactosaminyltransferase that synthesizes a unique carbohydrate structure, GalNAc-beta-1-3GlcNAc, on N- and O-glycans. Has no galactose nor galactosaminyl transferase activity toward any acceptor substrate. Involved in alpha-dystroglycan (DAG1) glycosylation: acts coordinately with GTDC2/POMGnT2 to synthesize a GalNAc-beta3-GlcNAc-beta-terminus at the 4-position of protein O-mannose in the biosynthesis of the phosphorylated O-mannosyl trisaccharide (N-acetylgalactosamine-beta-3-N-acetylglucosamine-beta-4-(phosphate-6-)mannose), a carbohydrate structure present in alpha-dystroglycan, which is required for binding laminin G-like domain-containing extracellular proteins with high affinity. In Mus musculus (Mouse), this protein is UDP-GalNAc:beta-1,3-N-acetylgalactosaminyltransferase 2 (B3galnt2).